We begin with the raw amino-acid sequence, 122 residues long: Large ribosomal subunit protein uL14 (122 aa).

This sequence belongs to the universal ribosomal protein uL14 family. In terms of assembly, part of the 50S ribosomal subunit. Forms a cluster with proteins L3 and L19. In the 70S ribosome, L14 and L19 interact and together make contacts with the 16S rRNA in bridges B5 and B8.

Binds to 23S rRNA. Forms part of two intersubunit bridges in the 70S ribosome. This chain is Large ribosomal subunit protein uL14, found in Neisseria gonorrhoeae (strain ATCC 700825 / FA 1090).